Here is a 197-residue protein sequence, read N- to C-terminus: Putative RNA-binding protein EEED8.12 (197 aa).

Positions 61–138 (KSVFIGNVDF…RPIVVTAKRT (78 aa)) constitute an RRM domain. The segment at 142–166 (GMGHGVRGSSRGTFGRGRGAARGAP) is disordered.

This is Putative RNA-binding protein EEED8.12 from Caenorhabditis elegans.